A 583-amino-acid polypeptide reads, in one-letter code: Phosphoglucomutase, cytoplasmic (583 aa).

The disordered stretch occupies residues 1–20 (MANFKVSRVETTPFEGQKPG). 2 residues coordinate alpha-D-glucose 1,6-bisphosphate: R25 and S124. S124 serves as the catalytic Phosphoserine intermediate. Residues S124, D300, D302, and D304 each coordinate Mg(2+). A Phosphoserine modification is found at S124. 6 residues coordinate alpha-D-glucose 1,6-bisphosphate: D304, R305, T368, E387, S389, and K400.

The protein belongs to the phosphohexose mutase family. As to quaternary structure, monomer. Requires Mg(2+) as cofactor.

It localises to the cytoplasm. It catalyses the reaction alpha-D-glucose 1-phosphate = alpha-D-glucose 6-phosphate. The enzyme catalyses O-phospho-L-seryl-[protein] + alpha-D-glucose 1-phosphate = alpha-D-glucose 1,6-bisphosphate + L-seryl-[protein]. The catalysed reaction is alpha-D-glucose 1,6-bisphosphate + L-seryl-[protein] = O-phospho-L-seryl-[protein] + alpha-D-glucose 6-phosphate. Catalyzes the reversible isomerization of alpha-D-glucose 1-phosphate to alpha-D-glucose 6-phosphate. The mechanism proceeds via the intermediate compound alpha-D-glucose 1,6-bisphosphate. This enzyme participates in both the breakdown and synthesis of glucose. The protein is Phosphoglucomutase, cytoplasmic (PGM1) of Solanum tuberosum (Potato).